The primary structure comprises 356 residues: MTLQSDLPATVRPLGPVMLDVAGFALTEEERERLLDPLVGGVILFARNFRDSEQLQALTAEIHALRSPALIIAVDHEGGRVQRFRTDGFTRIPSMRCLGRLWERDHVAALESARCAGYVLAAELLAHGVDLSFTPVLDLDYGCSRVVGDRAFHRDPLVVAALAQSLVSGMADAGMGCVGKHFPGHGYAEADSHVEIPVDEREFDAIWTEDIAPYRHRLGRQLAGVMPAHVIYPRVDPNPAGFSRFWLQDILRGRVGFGGVIFSDDLTMEGATVVGDILARARAAFGAGCDVVLVCNRPDLAVDLLDRWAPDIAPESRARIEALRSRPQAADPFALELHPVYRQARDVVAGLVEDTA.

Residues Asp75, Arg83, Arg150, and 180–181 (KH) each bind substrate. Residue His193 is the Proton donor/acceptor of the active site. Asp264 functions as the Nucleophile in the catalytic mechanism.

This sequence belongs to the glycosyl hydrolase 3 family. NagZ subfamily.

It localises to the cytoplasm. It carries out the reaction Hydrolysis of terminal non-reducing N-acetyl-D-hexosamine residues in N-acetyl-beta-D-hexosaminides.. It functions in the pathway cell wall biogenesis; peptidoglycan recycling. Its function is as follows. Plays a role in peptidoglycan recycling by cleaving the terminal beta-1,4-linked N-acetylglucosamine (GlcNAc) from peptide-linked peptidoglycan fragments, giving rise to free GlcNAc, anhydro-N-acetylmuramic acid and anhydro-N-acetylmuramic acid-linked peptides. The chain is Beta-hexosaminidase from Aromatoleum aromaticum (strain DSM 19018 / LMG 30748 / EbN1) (Azoarcus sp. (strain EbN1)).